Here is a 194-residue protein sequence, read N- to C-terminus: Endonuclease V (194 aa).

Mg(2+) is bound by residues Asp31 and Glu95.

It belongs to the endonuclease V family. Mg(2+) serves as cofactor.

It is found in the cytoplasm. The enzyme catalyses Endonucleolytic cleavage at apurinic or apyrimidinic sites to products with a 5'-phosphate.. In terms of biological role, DNA repair enzyme involved in the repair of deaminated bases. Selectively cleaves double-stranded DNA at the second phosphodiester bond 3' to a deoxyinosine leaving behind the intact lesion on the nicked DNA. This Pyrococcus abyssi (strain GE5 / Orsay) protein is Endonuclease V.